A 900-amino-acid chain; its full sequence is 3'-5' exonuclease DinG (900 aa).

An Exonuclease domain is found at V8–L161. One can recognise a Helicase ATP-binding domain in the interval S241–R496. A276–S283 provides a ligand contact to ATP. The DEAH box motif lies at D448–H451. A Helicase C-terminal domain is found at D713–Q893.

It belongs to the helicase family. DinG subfamily. Type 2 sub-subfamily.

3'-5' exonuclease. The chain is 3'-5' exonuclease DinG from Staphylococcus haemolyticus (strain JCSC1435).